The following is a 483-amino-acid chain: Probable Xaa-Pro aminopeptidase MCYG_06503 (483 aa).

Mn(2+)-binding residues include aspartate 233, aspartate 244, glutamate 409, and glutamate 453.

It belongs to the peptidase M24B family. Mn(2+) serves as cofactor.

It catalyses the reaction Release of any N-terminal amino acid, including proline, that is linked to proline, even from a dipeptide or tripeptide.. In terms of biological role, catalyzes the removal of a penultimate prolyl residue from the N-termini of peptides. This is Probable Xaa-Pro aminopeptidase MCYG_06503 from Arthroderma otae (strain ATCC MYA-4605 / CBS 113480) (Microsporum canis).